Consider the following 451-residue polypeptide: AP-4 complex subunit mu (451 aa).

The MHD domain maps to 184–450 (REEIFVDIIE…VTQANSYVAR (267 aa)).

This sequence belongs to the adaptor complexes medium subunit family. As to quaternary structure, adaptor protein complex 4 (AP-4) is a heterotetramer composed of two large adaptins (epsilon-type subunit and beta-type subunit), a medium adaptin (mu-type subunit) and a small adaptin (sigma-type subunit).

The protein resides in the golgi apparatus. Its subcellular location is the trans-Golgi network. The protein localises to the membrane. It localises to the coated pit. Functionally, subunit of novel type of clathrin- or non-clathrin-associated protein coat involved in targeting proteins from the trans-Golgi network (TGN) to the endosomal-lysosomal system. This is AP-4 complex subunit mu (AP4M) from Arabidopsis thaliana (Mouse-ear cress).